Consider the following 227-residue polypeptide: Mitochondrial inner membrane protease ATP23 (227 aa).

An a divalent metal cation-binding site is contributed by His124. Glu125 is an active-site residue. His128 provides a ligand contact to a divalent metal cation.

Belongs to the peptidase M76 family. As to quaternary structure, interacts with ATP6.

It is found in the mitochondrion inner membrane. Its function is as follows. Has a dual role in the assembly of mitochondrial ATPase. Acts as a protease that removes the N-terminal 10 residues of mitochondrial ATPase CF(0) subunit 6 (ATP6) at the intermembrane space side. Also involved in the correct assembly of the membrane-embedded ATPase CF(0) particle, probably mediating association of ATP6 with the subunit 9 ring. The protein is Mitochondrial inner membrane protease ATP23 (ATP23) of Saccharomyces cerevisiae (strain Lalvin EC1118 / Prise de mousse) (Baker's yeast).